Reading from the N-terminus, the 454-residue chain is CCA-adding enzyme (454 aa).

ATP-binding residues include Ser53 and Lys56. CTP contacts are provided by Ser53 and Lys56. Asp65, Asp67, and Asp119 together coordinate Mg(2+). 3 residues coordinate ATP: His142, Lys161, and Tyr170. His142, Lys161, and Tyr170 together coordinate CTP.

This sequence belongs to the tRNA nucleotidyltransferase/poly(A) polymerase family. Archaeal CCA-adding enzyme subfamily. In terms of assembly, homodimer. Mg(2+) serves as cofactor.

The catalysed reaction is a tRNA precursor + 2 CTP + ATP = a tRNA with a 3' CCA end + 3 diphosphate. It catalyses the reaction a tRNA with a 3' CCA end + 2 CTP + ATP = a tRNA with a 3' CCACCA end + 3 diphosphate. Functionally, catalyzes the addition and repair of the essential 3'-terminal CCA sequence in tRNAs without using a nucleic acid template. Adds these three nucleotides in the order of C, C, and A to the tRNA nucleotide-73, using CTP and ATP as substrates and producing inorganic pyrophosphate. tRNA 3'-terminal CCA addition is required both for tRNA processing and repair. Also involved in tRNA surveillance by mediating tandem CCA addition to generate a CCACCA at the 3' terminus of unstable tRNAs. While stable tRNAs receive only 3'-terminal CCA, unstable tRNAs are marked with CCACCA and rapidly degraded. The chain is CCA-adding enzyme from Thermococcus gammatolerans (strain DSM 15229 / JCM 11827 / EJ3).